Reading from the N-terminus, the 576-residue chain is F-actin capping regulator BSP1 (576 aa).

The interval 24–50 (RYSNIPSSKPAGEALSPVRSHNSGEYR) is disordered. Serine 46, serine 79, and serine 88 each carry phosphoserine. 2 disordered regions span residues 132–160 (NDSN…PREK) and 173–316 (GRAD…KRIP). Serine 185 carries the post-translational modification Phosphoserine. Over residues 191–206 (TRRDHIKITDGNEEKP) the composition is skewed to basic and acidic residues. Serine 220 carries the post-translational modification Phosphoserine. 2 stretches are compositionally biased toward polar residues: residues 243–255 (SRST…LSSL) and 264–279 (KSYN…TVKS). The segment covering 304–313 (KPTPPSPPAK) has biased composition (pro residues). Phosphoserine occurs at positions 309 and 320. The interval 408 to 470 (SIPEAIKGIQ…LSLRNNLKKR (63 aa)) is interaction with F-actin. The interval 541-576 (DKYTTSRDETVKETKPLVHPNKNRTRGPRRKLPTRV) is disordered. Residues 544 to 556 (TTSRDETVKETKP) are compositionally biased toward basic and acidic residues. The tract at residues 547 to 576 (RDETVKETKPLVHPNKNRTRGPRRKLPTRV) is interaction with the F-actin capping complex. The span at 561 to 576 (NKNRTRGPRRKLPTRV) shows a compositional bias: basic residues.

As to quaternary structure, interacts (via C-terminus) with the CAP1-CAP2 F-actin capping protein complex. Interacts with INP52 (via SAC domain); the interaction is direct. Interacts with INP53 (via SAC domain); the interaction is direct. Interacts with RVS167. Interacts with SLA1. In terms of processing, phosphorylated by CDC28.

The protein localises to the cytoplasm. The protein resides in the cytoskeleton. It is found in the actin patch. It localises to the cell membrane. In terms of biological role, recruits the capping protein complex to actin patches and the actomyosin contractile ring, and/or stabilizes their interaction. May serve as an adapter to link INP52 and INP53 to the cortical actin cytoskeleton. Binds F-actin. This Saccharomyces cerevisiae (strain ATCC 204508 / S288c) (Baker's yeast) protein is F-actin capping regulator BSP1 (BSP1).